The following is a 103-amino-acid chain: Putative ribosomal RNA-processing protein 7 homolog B (103 aa).

The segment covering 1-19 has biased composition (basic and acidic residues); the sequence is MEAYDQKIAEEEAKAKEEE. A disordered region spans residues 1–25; the sequence is MEAYDQKIAEEEAKAKEEEGVPDEE. Residues 71–100 are a coiled coil; it reads ESKMEHLAQLRKKFEEDKQRIELLRAQRKF.

It belongs to the RRP7 family.

The protein is Putative ribosomal RNA-processing protein 7 homolog B of Homo sapiens (Human).